Here is a 281-residue protein sequence, read N- to C-terminus: Predicted GPI-anchored protein 39 (281 aa).

An N-terminal signal peptide occupies residues M1 to A18. Disordered stretches follow at residues H52–V94 and V106–E227. 4 stretches are compositionally biased toward low complexity: residues S69–V94, V106–D158, A167–T203, and S210–E227. N-linked (GlcNAc...) asparagine glycosylation occurs at N150. N239, N246, N249, and N252 each carry an N-linked (GlcNAc...) asparagine glycan. S256 is lipidated: GPI-anchor amidated serine. A propeptide spans A257–I281 (removed in mature form).

It localises to the cell membrane. The sequence is that of Predicted GPI-anchored protein 39 (PGA39) from Candida albicans (strain SC5314 / ATCC MYA-2876) (Yeast).